The following is a 445-amino-acid chain: Acyl-lipid (7-3)-desaturase (445 aa).

The 81-residue stretch at 11 to 91 (VAELRAAEVA…MSKFFVGSLD (81 aa)) folds into the Cytochrome b5 heme-binding domain. Heme-binding residues include H50 and H73. 2 helical membrane passes run 126–146 (YWLK…YMLL) and 148–168 (GKTL…GLNI). The Histidine box-1 motif lies at 170–174 (HDANH). Residues 205 to 210 (HVVMHH) carry the Histidine box-2 motif. 3 helical membrane passes run 247–267 (ILPG…LELL), 283–303 (LFAP…ALPL), and 312–332 (ALCI…FFFI). The Histidine box-3 signature appears at 380–384 (QIEHH).

Belongs to the fatty acid desaturase type 1 family. Fe(2+) is required as a cofactor.

It localises to the membrane. It carries out the reaction a (7Z,10Z,13Z,16Z,19Z)-docosapentaenoyl-containing glycerolipid + 2 Fe(II)-[cytochrome b5] + O2 + 2 H(+) = a (4Z,7Z,10Z,13Z,16Z,19Z)-docosahexaenoyl-containing glycerolipid + 2 Fe(III)-[cytochrome b5] + 2 H2O. It catalyses the reaction a (7Z,10Z,13Z,16Z)-docosatetraenoyl-containing glycerolipid + 2 Fe(II)-[cytochrome b5] + O2 + 2 H(+) = a (4Z,7Z,10Z,13Z,16Z)-docosapentaenoyl-containing glycerolipid + 2 Fe(III)-[cytochrome b5] + 2 H2O. Functionally, fatty acid desaturase that introduces a cis double bond at the 4-position in 22-carbon polyunsaturated fatty acids that contain a Delta(7) double bond, resulting in the production of delta-4 desaturated fatty acid docosahexanoic acid (DHA). Mediates desaturation of 22:5n-3 and 22:4n-6 into 22:6n-3 and 22:5n-6 respectively. The chain is Acyl-lipid (7-3)-desaturase from Diacronema lutheri (Unicellular marine alga).